We begin with the raw amino-acid sequence, 472 residues long: Argininosuccinate lyase (472 aa).

This sequence belongs to the lyase 1 family. Argininosuccinate lyase subfamily.

It is found in the cytoplasm. The catalysed reaction is 2-(N(omega)-L-arginino)succinate = fumarate + L-arginine. It participates in amino-acid biosynthesis; L-arginine biosynthesis; L-arginine from L-ornithine and carbamoyl phosphate: step 3/3. The chain is Argininosuccinate lyase from Syntrophus aciditrophicus (strain SB).